The following is a 352-amino-acid chain: Putative [LysW]-L-2-aminoadipate/[LysW]-L-glutamate phosphate reductase (352 aa).

NADP(+)-binding positions include 10–13 (SGFT) and 34–36 (SRK). Residue cysteine 151 is part of the active site. NADP(+) is bound at residue asparagine 319.

Belongs to the NAGSA dehydrogenase family. Type 1 subfamily. LysY sub-subfamily.

It localises to the cytoplasm. The enzyme catalyses [amino-group carrier protein]-C-terminal-N-(1-carboxy-5-oxopentan-1-yl)-L-glutamine + phosphate + NADP(+) = [amino-group carrier protein]-C-terminal-N-(1-carboxy-5-phosphooxy-5-oxopentan-1-yl)-L-glutamine + NADPH + H(+). It catalyses the reaction [amino-group carrier protein]-C-terminal-gamma-(L-glutamyl-5-semialdehyde)-L-glutamate + phosphate + NADP(+) = [amino-group carrier protein]-C-terminal-gamma-(5-phospho-L-glutamyl)-L-glutamate + NADPH + H(+). Its pathway is amino-acid biosynthesis; L-lysine biosynthesis via AAA pathway; L-lysine from L-alpha-aminoadipate (Thermus route): step 3/5. It participates in amino-acid biosynthesis; L-arginine biosynthesis. Involved in both the arginine and lysine biosynthetic pathways. The sequence is that of Putative [LysW]-L-2-aminoadipate/[LysW]-L-glutamate phosphate reductase from Pyrobaculum neutrophilum (strain DSM 2338 / JCM 9278 / NBRC 100436 / V24Sta) (Thermoproteus neutrophilus).